A 115-amino-acid chain; its full sequence is Guanylin (115 aa).

The first 21 residues, 1–21 (MNAFLLSALCLLGAWAALAGG), serve as a signal peptide directing secretion. Intrachain disulfides connect Cys-69-Cys-82, Cys-104-Cys-112, and Cys-107-Cys-115.

This sequence belongs to the guanylin family. Highly expressed in ileum and colon. Found in plasma.

It is found in the secreted. Endogenous activator of intestinal guanylate cyclase. It stimulates this enzyme through the same receptor binding region as the heat-stable enterotoxins. The sequence is that of Guanylin (GUCA2A) from Homo sapiens (Human).